We begin with the raw amino-acid sequence, 191 residues long: DNA-directed RNA polymerase subunit Rpo3 (191 aa).

This sequence belongs to the archaeal Rpo3/eukaryotic RPB3 RNA polymerase subunit family. As to quaternary structure, part of the RNA polymerase complex. Interacts with Rpo12. Forms an Rpo3-Rpo10-Rpo11-Rpo12 complex upon coexpression.

Its subcellular location is the cytoplasm. The catalysed reaction is RNA(n) + a ribonucleoside 5'-triphosphate = RNA(n+1) + diphosphate. Its function is as follows. DNA-dependent RNA polymerase (RNAP) catalyzes the transcription of DNA into RNA using the four ribonucleoside triphosphates as substrates. The chain is DNA-directed RNA polymerase subunit Rpo3 from Methanocaldococcus jannaschii (strain ATCC 43067 / DSM 2661 / JAL-1 / JCM 10045 / NBRC 100440) (Methanococcus jannaschii).